A 560-amino-acid polypeptide reads, in one-letter code: Mannosyl-oligosaccharide 1,2-alpha-mannosidase MNS1 (560 aa).

Over 1-27 the chain is Cytoplasmic; it reads MARSRSISGYGIWKYLNPAYYLRRPRR. A helical; Signal-anchor for type II membrane protein membrane pass occupies residues 28–47; sequence LALLFIVFVSVSMLVWDRIN. A coiled-coil region spans residues 47 to 80; the sequence is NLAREHEVEVFKLNEEVSRLEQMLEELNGGVGNK. At 48-560 the chain is on the lumenal side; the sequence is LAREHEVEVF…QRKFGHQINV (513 aa). Glu179 acts as the Proton donor in catalysis. Asp312 is an active-site residue. The N-linked (GlcNAc...) asparagine glycan is linked to Asn326. The cysteines at positions 377 and 409 are disulfide-linked. Glu423 acts as the Proton donor in catalysis. Glu445 is a catalytic residue. A glycan (N-linked (GlcNAc...) asparagine) is linked at Asn459. Thr529 lines the Ca(2+) pocket.

This sequence belongs to the glycosyl hydrolase 47 family. The cofactor is Ca(2+). It depends on Mn(2+) as a cofactor. Mg(2+) is required as a cofactor. In terms of tissue distribution, expressed in flowers, siliques, stems, leaves, roots, pollen grains, shoot apical meristems, hypocotyls and upper region of the root.

Its subcellular location is the golgi apparatus membrane. It catalyses the reaction N(4)-(alpha-D-Man-(1-&gt;2)-alpha-D-Man-(1-&gt;2)-alpha-D-Man-(1-&gt;3)-[alpha-D-Man-(1-&gt;2)-alpha-D-Man-(1-&gt;3)-[alpha-D-Man-(1-&gt;2)-alpha-D-Man-(1-&gt;6)]-alpha-D-Man-(1-&gt;6)]-beta-D-Man-(1-&gt;4)-beta-D-GlcNAc-(1-&gt;4)-beta-D-GlcNAc)-L-asparaginyl-[protein] (N-glucan mannose isomer 9A1,2,3B1,2,3) + 4 H2O = N(4)-(alpha-D-Man-(1-&gt;3)-[alpha-D-Man-(1-&gt;3)-[alpha-D-Man-(1-&gt;6)]-alpha-D-Man-(1-&gt;6)]-beta-D-Man-(1-&gt;4)-beta-D-GlcNAc-(1-&gt;4)-beta-D-GlcNAc)-L-asparaginyl-[protein] (N-glucan mannose isomer 5A1,2) + 4 beta-D-mannose. The catalysed reaction is N(4)-(alpha-D-Man-(1-&gt;2)-alpha-D-Man-(1-&gt;2)-alpha-D-Man-(1-&gt;3)-[alpha-D-Man-(1-&gt;3)-[alpha-D-Man-(1-&gt;2)-alpha-D-Man-(1-&gt;6)]-alpha-D-Man-(1-&gt;6)]-beta-D-Man-(1-&gt;4)-beta-D-GlcNAc-(1-&gt;4)-beta-D-GlcNAc)-L-asparaginyl-[protein] (N-glucan mannose isomer 8A1,2,3B1,3) + 3 H2O = N(4)-(alpha-D-Man-(1-&gt;3)-[alpha-D-Man-(1-&gt;3)-[alpha-D-Man-(1-&gt;6)]-alpha-D-Man-(1-&gt;6)]-beta-D-Man-(1-&gt;4)-beta-D-GlcNAc-(1-&gt;4)-beta-D-GlcNAc)-L-asparaginyl-[protein] (N-glucan mannose isomer 5A1,2) + 3 beta-D-mannose. The enzyme catalyses N(4)-(alpha-D-Man-(1-&gt;2)-alpha-D-Man-(1-&gt;2)-alpha-D-Man-(1-&gt;3)-[alpha-D-Man-(1-&gt;2)-alpha-D-Man-(1-&gt;3)-[alpha-D-Man-(1-&gt;2)-alpha-D-Man-(1-&gt;6)]-alpha-D-Man-(1-&gt;6)]-beta-D-Man-(1-&gt;4)-beta-D-GlcNAc-(1-&gt;4)-beta-D-GlcNAc)-L-asparaginyl-[protein] (N-glucan mannose isomer 9A1,2,3B1,2,3) + H2O = N(4)-(alpha-D-Man-(1-&gt;2)-alpha-D-Man-(1-&gt;2)-alpha-D-Man-(1-&gt;3)-[alpha-D-Man-(1-&gt;3)-[alpha-D-Man-(1-&gt;2)-alpha-D-Man-(1-&gt;6)]-alpha-D-Man-(1-&gt;6)]-beta-D-Man-(1-&gt;4)-beta-D-GlcNAc-(1-&gt;4)-beta-D-GlcNAc)-L-asparaginyl-[protein] (N-glucan mannose isomer 8A1,2,3B1,3) + beta-D-mannose. Its pathway is protein modification; protein glycosylation. Inhibited by kifunensine and 1-deoxymannojirimycin, but not by swainsonine. Its function is as follows. Class I alpha-mannosidase essential for early N-glycan processing. Progressively trims alpha-1,2-linked mannose residues. Produces Man(5)GlcNAc(2) from Man(8)GlcNAc(2), but only Man(6)GlcNAc(2) from Man(9)GlcNAc(2). Has difficulty acting on the terminal mannose of the b-branch. Involved in root development and cell wall biosynthesis. The chain is Mannosyl-oligosaccharide 1,2-alpha-mannosidase MNS1 (MNS1) from Arabidopsis thaliana (Mouse-ear cress).